Reading from the N-terminus, the 160-residue chain is Endoribonuclease YbeY (160 aa).

The Zn(2+) site is built by histidine 112, histidine 116, and histidine 122.

The protein belongs to the endoribonuclease YbeY family. Zn(2+) serves as cofactor.

The protein localises to the cytoplasm. Single strand-specific metallo-endoribonuclease involved in late-stage 70S ribosome quality control and in maturation of the 3' terminus of the 16S rRNA. The sequence is that of Endoribonuclease YbeY from Maricaulis maris (strain MCS10) (Caulobacter maris).